Here is a 145-residue protein sequence, read N- to C-terminus: Transcription antitermination protein NusB (145 aa).

Belongs to the NusB family.

Its function is as follows. Involved in transcription antitermination. Required for transcription of ribosomal RNA (rRNA) genes. Binds specifically to the boxA antiterminator sequence of the ribosomal RNA (rrn) operons. The polypeptide is Transcription antitermination protein NusB (Acetivibrio thermocellus (strain ATCC 27405 / DSM 1237 / JCM 9322 / NBRC 103400 / NCIMB 10682 / NRRL B-4536 / VPI 7372) (Clostridium thermocellum)).